Here is a 119-residue protein sequence, read N- to C-terminus: Parathyroid hormone (119 aa).

Residues 1–25 (MTSTKNLAKAIVILYAICFFTNSDG) form the signal peptide. Positions 26-31 (RPMMKR) are excised as a propeptide.

The protein belongs to the parathyroid hormone family. As to quaternary structure, interacts with PTH1R (via N-terminal extracellular domain).

The protein resides in the secreted. Parathyroid hormone elevates calcium level by dissolving the salts in bone and preventing their renal excretion. Acts by binding to its receptor, PTH1R, activating G protein-coupled receptor signaling. Stimulates [1-14C]-2-deoxy-D-glucose (2DG) transport and glycogen synthesis in osteoblastic cells. This Gallus gallus (Chicken) protein is Parathyroid hormone.